Consider the following 161-residue polypeptide: Transcription antitermination protein NusB (161 aa).

The protein belongs to the NusB family.

Its function is as follows. Involved in transcription antitermination. Required for transcription of ribosomal RNA (rRNA) genes. Binds specifically to the boxA antiterminator sequence of the ribosomal RNA (rrn) operons. This is Transcription antitermination protein NusB from Syntrophus aciditrophicus (strain SB).